A 478-amino-acid chain; its full sequence is Zinc metalloproteinase/disintegrin VMP-II (478 aa).

The N-terminal stretch at 1–20 is a signal peptide; that stretch reads MIQVLLVTICLAVFPYQGSS. Residues 21–190 constitute a propeptide that is removed on maturation; that stretch reads IILESGNVND…KASQLNLTPE (170 aa). Residues 197–393 enclose the Peptidase M12B domain; it reads RYIELVIVAD…HNPQCMLNEP (197 aa). Residues Glu-200 and Asp-284 each coordinate Ca(2+). 3 cysteine pairs are disulfide-bonded: Cys-308–Cys-388, Cys-348–Cys-372, and Cys-350–Cys-355. A Zn(2+)-binding site is contributed by His-333. Residue Glu-334 is part of the active site. Residues His-337 and His-343 each contribute to the Zn(2+) site. The Ca(2+) site is built by Cys-388 and Asn-391. The propeptide occupies 394–405; that stretch reads LGTDTVSRNELL. In terms of domain architecture, Disintegrin spans 414 to 478; that stretch reads GSPANPCCDA…ADCPRNRFHA (65 aa). 4 disulfides stabilise this stretch: Cys-420–Cys-443, Cys-434–Cys-440, Cys-439–Cys-464, and Cys-452–Cys-471. A Cell attachment site motif is present at residues 456-458; sequence RGD.

Belongs to the venom metalloproteinase (M12B) family. P-II subfamily. P-IIe sub-subfamily. In terms of assembly, heterodimer; disulfide-linked (disintegrin). It depends on Zn(2+) as a cofactor. As to expression, expressed by the venom gland.

Its subcellular location is the secreted. Impairs hemostasis in the envenomed animal. Its function is as follows. This recombinant protein inhibits ADP-induced platelet aggregation in whole human blood and this effect is concentration-dependent with an IC(50) of 34 nM. In Crotalus viridis viridis (Prairie rattlesnake), this protein is Zinc metalloproteinase/disintegrin VMP-II.